A 716-amino-acid chain; its full sequence is Ciliary WD repeat-containing protein ctxp80 (716 aa).

The segment at 1-53 is disordered; the sequence is MGCGGSSGASDPSSEKINWNNAEIHDEFKQEQKKAGAKRKAFDKTTGKAVEKE. The span at 8 to 21 shows a compositional bias: polar residues; sequence GASDPSSEKINWNN. Residues 23–53 are compositionally biased toward basic and acidic residues; that stretch reads EIHDEFKQEQKKAGAKRKAFDKTTGKAVEKE. WD repeat units follow at residues 167 to 208, 213 to 254, 257 to 297, 305 to 343, 345 to 382, 424 to 462, 529 to 568, 571 to 610, 639 to 678, and 683 to 715; these read YHTN…KKGR, KGGR…QVKK, SGPD…FKKK, GKPT…STYD, HGKG…AEKT, HSDG…STAL, DSGE…KLGT, AHNS…QDPS, TDGT…GATP, and GHSE…QWKK.

Belongs to the WD repeat EMAP family.

The sequence is that of Ciliary WD repeat-containing protein ctxp80 from Euplotoides octocarinatus (Freshwater ciliate).